The following is a 172-amino-acid chain: Small ribosomal subunit protein uS5 (172 aa).

Residues 17–80 (LKEKMIQVNR…DAARRDMVKV (64 aa)) form the S5 DRBM domain.

This sequence belongs to the universal ribosomal protein uS5 family. Part of the 30S ribosomal subunit. Contacts proteins S4 and S8.

In terms of biological role, with S4 and S12 plays an important role in translational accuracy. Its function is as follows. Located at the back of the 30S subunit body where it stabilizes the conformation of the head with respect to the body. The protein is Small ribosomal subunit protein uS5 of Methylibium petroleiphilum (strain ATCC BAA-1232 / LMG 22953 / PM1).